A 405-amino-acid chain; its full sequence is Terpene cyclase pbrA (405 aa).

Mg(2+)-binding residues include Asp-103, Glu-168, Asn-229, Ser-233, Glu-237, and Asp-241. Positions 103–108 match the D(D/E)XX(D/E) motif motif; it reads DDEISS. Residues 227–237 carry the NSE motif motif; the sequence is LVNDLFSFYKE. The WxxxxxRY motif motif lies at 316 to 323; the sequence is EDLGGSSA.

Belongs to the trichodiene synthase family. The cofactor is Mg(2+).

It functions in the pathway secondary metabolite biosynthesis; terpenoid biosynthesis. In terms of biological role, terpene cyclase; part of the gene cluster that mediates the biosynthesis of the sesquiterpenoid aspterric acid (AA), an inhibitor of dihydroxy-acid dehydratase (DHAD) effective as an herbicide. PbrA cyclizes farnesyl diphosphate (FPP) to produce (-)-daucane. The cytochrome P450 monooxygenase pbrBB then converts (-)-daucane into the alpha-epoxy carboxylate intermediate which is further converted into the tricyclic aspterric acid by the cytochrome P450 monooxygenase pbrC. This is Terpene cyclase pbrA from Penicillium brasilianum.